Here is a 219-residue protein sequence, read N- to C-terminus: Uracil-DNA glycosylase (219 aa).

Aspartate 61 (proton acceptor) is an active-site residue.

The protein belongs to the uracil-DNA glycosylase (UDG) superfamily. UNG family.

It localises to the cytoplasm. It carries out the reaction Hydrolyzes single-stranded DNA or mismatched double-stranded DNA and polynucleotides, releasing free uracil.. Excises uracil residues from the DNA which can arise as a result of misincorporation of dUMP residues by DNA polymerase or due to deamination of cytosine. The polypeptide is Uracil-DNA glycosylase (Neisseria meningitidis serogroup C (strain 053442)).